A 103-amino-acid chain; its full sequence is CLAVATA3/ESR (CLE)-related protein 22 (103 aa).

Positions 1–34 are cleaved as a signal peptide; it reads MGNYYSRRKSRKHITTVALIILLLLLFLFLYAKA. Residues 37–103 are disordered; it reads SSPNIHHHST…FTGPNPLHNR (67 aa). A compositionally biased stretch (basic residues) spans 41 to 50; the sequence is IHHHSTHGSL. Residues 66-76 show a composition bias toward polar residues; that stretch reads NAASSRGSKYT. The residue at position 97 (Pro-97) is a Hydroxyproline. A glycan (O-linked (Ara...) hydroxyproline) is linked at Pro-97.

The protein belongs to the CLV3/ESR signal peptide family. Post-translationally, the O-glycosylation (arabinosylation) of the hydroxyproline Pro-97 enhances binding affinity of the CLE22p peptide for its receptor. In terms of tissue distribution, mostly expressed in stems and apex, and, to a lower extent, in seedlings, leaves, flowers and siliques.

The protein resides in the secreted. It is found in the extracellular space. Extracellular signal peptide that regulates cell fate. Represses root apical meristem maintenance. The sequence is that of CLAVATA3/ESR (CLE)-related protein 22 from Arabidopsis thaliana (Mouse-ear cress).